Consider the following 313-residue polypeptide: Probable alpha-L-glutamate ligase (313 aa).

The region spanning 112 to 294 (LQMLMAQGIA…IALQMIVHLE (183 aa)) is the ATP-grasp domain. ATP-binding positions include Lys-148, 185 to 186 (EF), Asp-194, and 218 to 220 (RAN). Mg(2+)-binding residues include Asp-255, Glu-267, and Asn-269. 3 residues coordinate Mn(2+): Asp-255, Glu-267, and Asn-269.

Belongs to the RimK family. Mg(2+) is required as a cofactor. It depends on Mn(2+) as a cofactor.

The protein is Probable alpha-L-glutamate ligase of Pasteurella multocida (strain Pm70).